The sequence spans 450 residues: uncharacterized protein (450 aa).

Belongs to the heat shock protein 70 family.

This is an uncharacterized protein from Escherichia coli (strain K12).